The chain runs to 118 residues: U-scoloptoxin(05)-Cw1a (118 aa).

Positions 1-22 are cleaved as a signal peptide; sequence MNPLNLSTFIVFTLFAASATTA.

Belongs to the scoloptoxin-05 family. In terms of processing, contains 5 disulfide bonds. In terms of tissue distribution, expressed by the venom gland.

The protein localises to the secreted. The polypeptide is U-scoloptoxin(05)-Cw1a (Cormocephalus westwoodi (Westwood's green centipede)).